A 99-amino-acid polypeptide reads, in one-letter code: Large ribosomal subunit protein eL30 (99 aa).

Belongs to the eukaryotic ribosomal protein eL30 family.

The sequence is that of Large ribosomal subunit protein eL30 from Methanosarcina acetivorans (strain ATCC 35395 / DSM 2834 / JCM 12185 / C2A).